The chain runs to 221 residues: Urease accessory protein UreF (221 aa).

It belongs to the UreF family. In terms of assembly, ureD, UreF and UreG form a complex that acts as a GTP-hydrolysis-dependent molecular chaperone, activating the urease apoprotein by helping to assemble the nickel containing metallocenter of UreC. The UreE protein probably delivers the nickel.

Its subcellular location is the cytoplasm. Its function is as follows. Required for maturation of urease via the functional incorporation of the urease nickel metallocenter. The protein is Urease accessory protein UreF of Aliivibrio fischeri (strain ATCC 700601 / ES114) (Vibrio fischeri).